The sequence spans 153 residues: Aspartate carbamoyltransferase regulatory chain (153 aa).

Residues cysteine 109, cysteine 114, cysteine 138, and cysteine 141 each coordinate Zn(2+).

It belongs to the PyrI family. In terms of assembly, contains catalytic and regulatory chains. Zn(2+) serves as cofactor.

In terms of biological role, involved in allosteric regulation of aspartate carbamoyltransferase. The protein is Aspartate carbamoyltransferase regulatory chain of Vibrio vulnificus (strain CMCP6).